Consider the following 175-residue polypeptide: E1B protein, small T-antigen (175 aa).

The disordered stretch occupies residues L153–A175.

It belongs to the adenoviridae E1B 19 kDa protein family.

The sequence is that of E1B protein, small T-antigen from Mus musculus (Mouse).